Here is a 645-residue protein sequence, read N- to C-terminus: MGVIMAAERIIGIDLGTTNSCVAVMEAGTAKVIENSEGSRTTPSVVAFTENERLVGELAKRQANINAQNTIYASKRIIGRRYDDMRDVKCPYEVFPAKNGDAWIRARGEGYSPVQIGAFVLEKIKETAERYFGAPVKKAVITVPAYFNDAQRQATKDAGTIAGLDVVRIINEPTAAALAYGLDKGDKQRTIVVYDLGGGTFDVSVLEIAEGVFEVKATNGDTKLGGEDFDNAVMEHMMESFKQETGIDLHNDPMAVQRIKEAAEKAKIELSSRLETDITLPFISSDSTGAKHLSLKLTRAKFEGLVSELIERTIEPCKKALDDAGIKDTSKIDEVVLVGGMTRMPKVIQRVKDFFGGKEPCKGVNPDEVVAIGAAIQGGILTGDVRDVLLLDVAPLSLGIETLGGVFTPLIERNTTIPTKKSQVFSTAEDGQTAVTIKVYQGERKMAVDNKLLGQFSLEGIPSAPRGIPQIEVTFDIDANGIVHVSAKDKASGKEQTIKIQSSGGLSEEEIKKMVQDAQDRAEEDEKRKKRVELKNSAEALIHSTEKSLNDYGDKISSADKSGIEAAIKELRECLSNDDSSSDVIQQKYDALMQLSMKLGEAAYSAQKDSGTSTDSTASDTSGNPEERVVDSEYQEIKKDDEDKK.

The residue at position 200 (threonine 200) is a Phosphothreonine; by autocatalysis. The interval 603 to 645 (AYSAQKDSGTSTDSTASDTSGNPEERVVDSEYQEIKKDDEDKK) is disordered. Low complexity predominate over residues 609–623 (DSGTSTDSTASDTSG). The segment covering 625-645 (PEERVVDSEYQEIKKDDEDKK) has biased composition (basic and acidic residues).

It belongs to the heat shock protein 70 family.

Its function is as follows. Acts as a chaperone. This Anaplasma marginale (strain St. Maries) protein is Chaperone protein DnaK.